Consider the following 302-residue polypeptide: MLDVNSVRKHVLKTGSLTSAVGTGTIYQGTYNRYAKKKELNIIVTSSGSNNVIMRQVPLFDKEDLDAMKSDTTSNKYLHIGCITVSIEPLLHQRYMKNFGKTIAGNCAIIDSTFRKVDQSIISLHKYDLSRGRADYVSYPNHCLSLTDPMIQKRLSVLLGIKGIDVEPGVELFSICIGYIVSSVNTLHPVSQLGIQGVAINGTESADIDELGAEDIDQLSLSYNDSKIISLPSDEDIYYRSKGSLFSKGRTIKRRTMRTRVPDPEEPIKLTKSQSSRIEHGKVMRLLKNKQIREKIERGMIA.

Transports viral genome to neighboring plant cells directly through plasmosdesmata, without any budding. The movement protein allows efficient cell to cell propagation, by bypassing the host cell wall barrier. The chain is Probable movement protein 4b (4b) from Embergeria (Garden lettuce).